Consider the following 354-residue polypeptide: Allantoicase (354 aa).

Belongs to the allantoicase family.

It catalyses the reaction allantoate + H2O = (S)-ureidoglycolate + urea. It functions in the pathway nitrogen metabolism; (S)-allantoin degradation; (S)-ureidoglycolate from allantoate (aminidohydrolase route): step 1/1. Utilization of purines as secondary nitrogen sources, when primary sources are limiting. This Neurospora crassa (strain ATCC 24698 / 74-OR23-1A / CBS 708.71 / DSM 1257 / FGSC 987) protein is Allantoicase (alc-1).